Consider the following 512-residue polypeptide: Maturase K (512 aa).

This sequence belongs to the intron maturase 2 family. MatK subfamily.

It is found in the plastid. Its subcellular location is the chloroplast. In terms of biological role, usually encoded in the trnK tRNA gene intron. Probably assists in splicing its own and other chloroplast group II introns. The chain is Maturase K from Ginkgo biloba (Ginkgo).